The following is a 99-amino-acid chain: Large ribosomal subunit protein eL30 (99 aa).

Belongs to the eukaryotic ribosomal protein eL30 family.

In Methanobrevibacter smithii (strain ATCC 35061 / DSM 861 / OCM 144 / PS), this protein is Large ribosomal subunit protein eL30.